The primary structure comprises 812 residues: Eukaryotic translation initiation factor 3 subunit C (812 aa).

Positions 1-110 (MSRFFSSNYE…EESDEEDGKK (110 aa)) are disordered. Acidic residues-rich tracts occupy residues 18–30 (SEED…EEDL) and 38–64 (SELD…DSDD). Phosphoserine is present on residues S98, S99, and S103. The region spanning 608–783 (YHQHINLDLI…TIFVVEKGDE (176 aa)) is the PCI domain.

Belongs to the eIF-3 subunit C family. In terms of assembly, the eukaryotic translation initiation factor 3 (eIF-3) core complex is composed of TIF32, PRT1, NIP1, TIF34 and TIF35. A subcomplex of TIF32, NIP1 and PRT1 mediates the interaction with eIF-1, TIF5/eIF-5 and HCR1. The factors eIF-1, eIF-2, eIF-3, TIF5/eIF-5 and methionyl-tRNAi form a multifactor complex (MFC) that may bind to the 40S ribosome. TIF32, NIP1 and TIF5/eIF-5 comprise a minimal 40S-ribosome-binding unit. NIP1 interacts with TIF5/eIF-5 and SUI1.

The protein resides in the cytoplasm. In terms of biological role, component of the eukaryotic translation initiation factor 3 (eIF-3) complex, which is involved in protein synthesis of a specialized repertoire of mRNAs and, together with other initiation factors, stimulates binding of mRNA and methionyl-tRNAi to the 40S ribosome. The eIF-3 complex specifically targets and initiates translation of a subset of mRNAs involved in cell proliferation. The polypeptide is Eukaryotic translation initiation factor 3 subunit C (Saccharomyces cerevisiae (strain ATCC 204508 / S288c) (Baker's yeast)).